Consider the following 67-residue polypeptide: MSLFPVIVVFGLSFPPIFFELLLSLAIFWLVRRVLLPTGIYDFVWHPALFNTALYCCLFYLISRLFV.

Transmembrane regions (helical) follow at residues 3–23 (LFPVIVVFGLSFPPIFFELLL) and 43–63 (FVWHPALFNTALYCCLFYLIS).

It belongs to the AaeX family.

It localises to the cell membrane. The chain is Protein AaeX from Escherichia coli O1:K1 / APEC.